The chain runs to 634 residues: Growth hormone receptor (634 aa).

The signal sequence occupies residues 1 to 18 (MDLWQLLLTLAVAGSSDA). At 19-260 (FSGSEATPAF…NPSACEEDFQ (242 aa)) the chain is on the extracellular side. Asn-46 carries N-linked (GlcNAc...) asparagine glycosylation. Cys-56 and Cys-66 are oxidised to a cystine. N-linked (GlcNAc...) asparagine glycosylation is present at Asn-73. A disulfide bond links Cys-97 and Cys-108. Asn-111 carries an N-linked (GlcNAc...) asparagine glycan. An intrachain disulfide couples Cys-122 to Cys-136. A Fibronectin type-III domain is found at 147–250 (PPVGLNWTLL…EVLLITFPQM (104 aa)). Asn-152, Asn-157, and Asn-196 each carry an N-linked (GlcNAc...) asparagine glycan. The WSXWS motif motif lies at 236–240 (YGKFS). The chain crosses the membrane as a helical span at residues 261–284 (FPWFLIIIFGILGLTVTLFLLIFS). The Cytoplasmic portion of the chain corresponds to 285–634 (KQQRIKMLIL…STDQLNKIMP (350 aa)). Residues 290–375 (KMLILPPVPV…HEKSLSIFGA (86 aa)) form a required for JAK2 binding region. The Box 1 motif signature appears at 293–301 (ILPPVPVPK). The UbE motif motif lies at 336 to 345 (DSWVEFIELD). Phosphoserine is present on Ser-337. A disordered region spans residues 451–471 (KPRPLPIGGTESTHQAVHTQL). The segment covering 460–471 (TESTHQAVHTQL) has biased composition (polar residues). A phosphotyrosine mark is found at Tyr-483 and Tyr-591.

The protein belongs to the type I cytokine receptor family. Type 1 subfamily. In terms of assembly, on growth hormone (GH) binding, forms homodimers and binds JAK2 via a box 1-containing domain. The soluble form (GHBP) is produced by phorbol ester-promoted proteolytic cleavage at the cell surface (shedding) by ADAM17/TACE. Shedding is inhibited by growth hormone (GH) binding to the receptor probably due to a conformational change in GHR rendering the receptor inaccessible to ADAM17. In terms of processing, on GH binding, phosphorylated on tyrosine residues in the cytoplasmic domain by JAK2. Post-translationally, ubiquitinated by the ECS(SOCS2) complex following ligand-binding and phosphorylation by JAK2, leading to its degradation by the proteasome. Regulation by the ECS(SOCS2) complex acts as a negative feedback loop of growth hormone receptor signaling. Ubiquitination is not sufficient for GHR internalization.

The protein resides in the cell membrane. It is found in the secreted. Its function is as follows. Receptor for pituitary gland growth hormone (GH1) involved in regulating postnatal body growth. On ligand binding, couples to the JAK2/STAT5 pathway. The soluble form (GHBP) acts as a reservoir of growth hormone in plasma and may be a modulator/inhibitor of GH signaling. The protein is Growth hormone receptor (GHR) of Ovis aries (Sheep).